The chain runs to 201 residues: Recombination protein RecR (201 aa).

A C4-type zinc finger spans residues 57-72; the sequence is CADCRTFTEQEVCNIC. Residues 81 to 176 form the Toprim domain; sequence GQICVVESPA…EASRIAHGVP (96 aa).

Belongs to the RecR family.

Functionally, may play a role in DNA repair. It seems to be involved in an RecBC-independent recombinational process of DNA repair. It may act with RecF and RecO. This chain is Recombination protein RecR, found in Escherichia coli O6:K15:H31 (strain 536 / UPEC).